The sequence spans 587 residues: ATP-dependent lipid A-core flippase (587 aa).

The next 5 membrane-spanning stretches (helical) occupy residues 31 to 51, 68 to 88, 145 to 165, 166 to 186, and 259 to 279; these read LIVS…LIYL, LKMM…TNFI, GSLI…AVMF, YTSW…AVLI, and VQVI…TPLI. The ABC transmembrane type-1 domain occupies 32–315; it reads IVSGVALVFN…LTAVNAQFQS (284 aa). The ABC transporter domain maps to 347 to 583; that stretch reads LEFKNVSFAY…NGAYKQLHSM (237 aa). 381–388 is a binding site for ATP; it reads GRSGSGKS.

The protein belongs to the ABC transporter superfamily. Lipid exporter (TC 3.A.1.106) family. Homodimer.

The protein localises to the cell inner membrane. It carries out the reaction ATP + H2O + lipid A-core oligosaccharideSide 1 = ADP + phosphate + lipid A-core oligosaccharideSide 2.. Involved in lipopolysaccharide (LPS) biosynthesis. Translocates lipid A-core from the inner to the outer leaflet of the inner membrane. Transmembrane domains (TMD) form a pore in the inner membrane and the ATP-binding domain (NBD) is responsible for energy generation. This Haemophilus influenzae (strain ATCC 51907 / DSM 11121 / KW20 / Rd) protein is ATP-dependent lipid A-core flippase.